We begin with the raw amino-acid sequence, 368 residues long: MRALSVFFALFCFLALSSASPGQDVVKRVTSGSLQQVTNFGSNPSGTLMYIYVPKNLATKPGIVVAIHYCTGTAQAYYTGSPYAQLAEQYGFIVIYPQSPYSGTCWDVSSQSALTHNGGGDSNSIANMVTWTISQYNADTSKVFVTGSSSGAMMTNVMAATYPELFAAATVYSGVSAGCFYSSSNQVDAWNSSCAQGNVISTPEVWGGIAKAMYPGYTGPRPRMQIYHGSTDTTLYPQNYYETCKQWAGVFGYNYNSPQSTQSNTPQANYQTTIWGPNLQGIFATGVGHTVPIHGEQDMEWFGFAGGSSTTTTQPTTTSTTTSSGGSSTGTGVAAHWGQCGGNGWTGPTVCASGYTCTVVNAWYSQCL.

Residues 1–19 (MRALSVFFALFCFLALSSA) form the signal peptide. Residues 20-28 (SPGQDVVKR) constitute a propeptide that is removed on maturation. The interval 32–304 (GSLQQVTNFG…GEQDMEWFGF (273 aa)) is catalytic. Catalysis depends on Ser149, which acts as the Charge relay system. Residue Asn191 is glycosylated (N-linked (GlcNAc...) asparagine). Residues 305-333 (AGGSSTTTTQPTTTSTTTSSGGSSTGTGV) are ser/Thr-rich linker. Residues 306-330 (GGSSTTTTQPTTTSTTTSSGGSSTG) are disordered. The segment covering 307 to 330 (GSSTTTTQPTTTSTTTSSGGSSTG) has biased composition (low complexity). The 37-residue stretch at 332 to 368 (GVAAHWGQCGGNGWTGPTVCASGYTCTVVNAWYSQCL) folds into the CBM1 domain.

Belongs to the carbohydrate esterase 1 (CE1) family. AxeA subfamily. Monomer.

It localises to the secreted. It catalyses the reaction Deacetylation of xylans and xylo-oligosaccharides.. It functions in the pathway glycan degradation; xylan degradation. Its function is as follows. Acetylxylan esterase involved in the hydrolysis of xylan, a major structural heterogeneous polysaccharide found in plant biomass representing the second most abundant polysaccharide in the biosphere, after cellulose. Degrades acetylated xylans by cleaving acetyl side groups from the hetero-xylan backbone. In Neosartorya fischeri (strain ATCC 1020 / DSM 3700 / CBS 544.65 / FGSC A1164 / JCM 1740 / NRRL 181 / WB 181) (Aspergillus fischerianus), this protein is Probable acetylxylan esterase A (axeA).